The chain runs to 420 residues: Gamma-glutamyl phosphate reductase (420 aa).

This sequence belongs to the gamma-glutamyl phosphate reductase family.

Its subcellular location is the cytoplasm. It catalyses the reaction L-glutamate 5-semialdehyde + phosphate + NADP(+) = L-glutamyl 5-phosphate + NADPH + H(+). It participates in amino-acid biosynthesis; L-proline biosynthesis; L-glutamate 5-semialdehyde from L-glutamate: step 2/2. Catalyzes the NADPH-dependent reduction of L-glutamate 5-phosphate into L-glutamate 5-semialdehyde and phosphate. The product spontaneously undergoes cyclization to form 1-pyrroline-5-carboxylate. This Streptococcus pneumoniae (strain 70585) protein is Gamma-glutamyl phosphate reductase.